The chain runs to 568 residues: Proline--tRNA ligase (568 aa).

Belongs to the class-II aminoacyl-tRNA synthetase family. ProS type 1 subfamily. Homodimer.

The protein localises to the cytoplasm. It catalyses the reaction tRNA(Pro) + L-proline + ATP = L-prolyl-tRNA(Pro) + AMP + diphosphate. Catalyzes the attachment of proline to tRNA(Pro) in a two-step reaction: proline is first activated by ATP to form Pro-AMP and then transferred to the acceptor end of tRNA(Pro). As ProRS can inadvertently accommodate and process non-cognate amino acids such as alanine and cysteine, to avoid such errors it has two additional distinct editing activities against alanine. One activity is designated as 'pretransfer' editing and involves the tRNA(Pro)-independent hydrolysis of activated Ala-AMP. The other activity is designated 'posttransfer' editing and involves deacylation of mischarged Ala-tRNA(Pro). The misacylated Cys-tRNA(Pro) is not edited by ProRS. The polypeptide is Proline--tRNA ligase (Alkalilimnicola ehrlichii (strain ATCC BAA-1101 / DSM 17681 / MLHE-1)).